The chain runs to 793 residues: Signal transducer and activator of transcription 5A (793 aa).

Position 90 is a phosphotyrosine (Y90). S128 carries the post-translational modification Phosphoserine. Residues 589–686 enclose the SH2 domain; it reads WNDGAILGFV…EVFAKYYTPV (98 aa). Y682 and Y694 each carry phosphotyrosine. S779 carries the post-translational modification Phosphoserine.

Belongs to the transcription factor STAT family. As to quaternary structure, forms a homodimer or a heterodimer with a related family member. Interacts with NCOA1 and SOCS7. Binds NR3C1. Interacts with ERBB4. Interacts with EBF4. Interacts with CD69. In terms of processing, ISGylated. Post-translationally, tyrosine phosphorylated in response to KITLG/SCF, IL2, IL3, IL7, IL15, CSF2/GMCSF, GH1, PRL, EPO and THPO. Activated KIT promotes phosphorylation on tyrosine residues and subsequent translocation to the nucleus. Tyrosine phosphorylated in response to constitutively activated FGFR1, FGFR2, FGFR3 and FGFR4. Tyrosine phosphorylation is required for DNA-binding activity and dimerization. Serine phosphorylation is also required for maximal transcriptional activity. Tyrosine phosphorylated in response to signaling via activated FLT3; wild-type FLT3 results in much weaker phosphorylation than constitutively activated mutant FLT3. Alternatively, can be phosphorylated by JAK2 at Tyr-694. In terms of tissue distribution, in the virgin, found in most tissues except brain and muscle. During lactation, abundantly found in mammary tissue, as well as in other secretory organs such as salivary gland and seminal vesicle.

It localises to the cytoplasm. Its subcellular location is the nucleus. Its function is as follows. Carries out a dual function: signal transduction and activation of transcription. Mediates cellular responses to the cytokine KITLG/SCF and other growth factors. May mediate cellular responses to activated FGFR1, FGFR2, FGFR3 and FGFR4. Binds to the GAS element and activates PRL-induced transcription. Regulates the expression of milk proteins during lactation. The chain is Signal transducer and activator of transcription 5A (Stat5a) from Mus musculus (Mouse).